Consider the following 704-residue polypeptide: 1,4-alpha-glucan-branching enzyme (704 aa).

(1,4-alpha-D-glucosyl)n-binding residues include tryptophan 94 and lysine 131. Position 190 is a phosphoserine (serine 190). The Nucleophile role is filled by aspartate 356. Residue glutamate 417 is the Proton donor of the active site.

Belongs to the glycosyl hydrolase 13 family. GlgB subfamily.

It is found in the cytoplasm. It catalyses the reaction Transfers a segment of a (1-&gt;4)-alpha-D-glucan chain to a primary hydroxy group in a similar glucan chain.. The protein operates within glycan biosynthesis; glycogen biosynthesis. Glycogen-branching enzyme participates in the glycogen biosynthetic process along with glycogenin and glycogen synthase. Generates alpha-1,6-glucosidic branches from alpha-1,4-linked glucose chains, to increase solubility of the glycogen polymer. In Saccharomyces cerevisiae (strain ATCC 204508 / S288c) (Baker's yeast), this protein is 1,4-alpha-glucan-branching enzyme (GLC3).